The following is a 425-amino-acid chain: Serine--tRNA ligase (425 aa).

Residue 233 to 235 coordinates L-serine; that stretch reads TAE. 264–266 provides a ligand contact to ATP; it reads RRE. Glu-287 contacts L-serine. 351–354 is an ATP binding site; it reads EISS. Ser-385 lines the L-serine pocket.

The protein belongs to the class-II aminoacyl-tRNA synthetase family. Type-1 seryl-tRNA synthetase subfamily. Homodimer. The tRNA molecule binds across the dimer.

The protein resides in the cytoplasm. The catalysed reaction is tRNA(Ser) + L-serine + ATP = L-seryl-tRNA(Ser) + AMP + diphosphate + H(+). It carries out the reaction tRNA(Sec) + L-serine + ATP = L-seryl-tRNA(Sec) + AMP + diphosphate + H(+). The protein operates within aminoacyl-tRNA biosynthesis; selenocysteinyl-tRNA(Sec) biosynthesis; L-seryl-tRNA(Sec) from L-serine and tRNA(Sec): step 1/1. Functionally, catalyzes the attachment of serine to tRNA(Ser). Is also able to aminoacylate tRNA(Sec) with serine, to form the misacylated tRNA L-seryl-tRNA(Sec), which will be further converted into selenocysteinyl-tRNA(Sec). In Synechococcus sp. (strain WH7803), this protein is Serine--tRNA ligase.